Consider the following 345-residue polypeptide: Membrane progestin receptor gamma-A (345 aa).

Residues 1–52 (MLNLIKLPQVFTINQVPKVFHEDGIISGYRHPCSSAKDCVLSLFQLTNETLN) are Cytoplasmic-facing. Residues 53–73 (IWTHFLPTWFFLWKLLTVVLV) traverse the membrane as a helical segment. Residues 74–80 (LEDWRDP) lie on the Extracellular side of the membrane. The chain crosses the membrane as a helical span at residues 81 to 101 (FIWPFLVFLLSCCVYPLASSC). At 102–114 (AHTFSTMSERARH) the chain is on the cytoplasmic side. The helical transmembrane segment at 115–135 (ICFFFDYGALSFYSLGSAIIY) threads the bilayer. Residues 136-148 (SSYSFPDKWVNGT) are Extracellular-facing. The chain crosses the membrane as a helical span at residues 149 to 169 (FHLNYVSIAVVNSIISTALAC). The Cytoplasmic segment spans residues 170–201 (YSRLGLPFLEYNCHSIKRPSGKLDQKLCKCLR). Residues 202 to 222 (IIAFVYPYLFDNIPLFYRIFV) form a helical membrane-spanning segment. The Extracellular portion of the chain corresponds to 223-272 (CAGEGCTVNEANTVHYQHTSLAFFTGFLFATHLPERLAPGSFDYIGHSHQ). The chain crosses the membrane as a helical span at residues 273-293 (LFHVFAIIGTYFQMTAIELDM). At 294–314 (AARKQWLHAHLPPVTFLNTVG) the chain is on the cytoplasmic side. The helical transmembrane segment at 315–335 (AAFFSVVSGLCIVYVFSLSLF) threads the bilayer. At 336–345 (STRGVKNKSF) the chain is on the extracellular side.

This sequence belongs to the ADIPOR family.

It is found in the membrane. In terms of biological role, steroid membrane receptor. Binds progesterone. May be involved in oocyte maturation. The protein is Membrane progestin receptor gamma-A (paqr5a) of Danio rerio (Zebrafish).